Reading from the N-terminus, the 89-residue chain is MAHKKGASSSRNGRDSNAQRLGVKRFGGQLVNAGEIIVRQRGTHFHPGDGVGRGGDDTLFALRDGNVEFGTRRGRRVVNVTPVEAPVEA.

The disordered stretch occupies residues 1 to 22; sequence MAHKKGASSSRNGRDSNAQRLG. Residues 7–19 are compositionally biased toward polar residues; that stretch reads ASSSRNGRDSNAQ.

The protein belongs to the bacterial ribosomal protein bL27 family.

The chain is Large ribosomal subunit protein bL27 from Cutibacterium acnes (strain DSM 16379 / KPA171202) (Propionibacterium acnes).